Here is a 537-residue protein sequence, read N- to C-terminus: 2-isopropylmalate synthase (537 aa).

A Pyruvate carboxyltransferase domain is found at 8 to 273 (IIIFDTTLRD…FLGRPVDSME (266 aa)). Asp17, His208, His210, and Asn244 together coordinate Mn(2+). Residues 408–537 (RLELVQVSCG…PSEPVLTSKN (130 aa)) are regulatory domain.

This sequence belongs to the alpha-IPM synthase/homocitrate synthase family. LeuA type 1 subfamily. In terms of assembly, homodimer. The cofactor is Mn(2+).

Its subcellular location is the cytoplasm. The catalysed reaction is 3-methyl-2-oxobutanoate + acetyl-CoA + H2O = (2S)-2-isopropylmalate + CoA + H(+). It participates in amino-acid biosynthesis; L-leucine biosynthesis; L-leucine from 3-methyl-2-oxobutanoate: step 1/4. Functionally, catalyzes the condensation of the acetyl group of acetyl-CoA with 3-methyl-2-oxobutanoate (2-ketoisovalerate) to form 3-carboxy-3-hydroxy-4-methylpentanoate (2-isopropylmalate). The protein is 2-isopropylmalate synthase of Crocosphaera subtropica (strain ATCC 51142 / BH68) (Cyanothece sp. (strain ATCC 51142)).